The sequence spans 54 residues: U1-ctenitoxin-Pr1a (54 aa).

Cystine bridges form between Cys2–Cys19, Cys9–Cys25, Cys16–Cys51, Cys18–Cys39, and Cys27–Cys37.

As to expression, expressed by the venom gland.

The protein resides in the secreted. Its function is as follows. Omega-agatoxins are antagonists of voltage-gated calcium channels (Cav). Causes rapid general flaccid paralysis followed by death in 10-30 minutes when injected in mice at dose levels of 5 ug per mouse. This chain is U1-ctenitoxin-Pr1a, found in Phoneutria reidyi (Brazilian Amazonian armed spider).